Here is a 121-residue protein sequence, read N- to C-terminus: Large ribosomal subunit protein bL12 (121 aa).

The protein belongs to the bacterial ribosomal protein bL12 family. In terms of assembly, homodimer. Part of the ribosomal stalk of the 50S ribosomal subunit. Forms a multimeric L10(L12)X complex, where L10 forms an elongated spine to which 2 to 4 L12 dimers bind in a sequential fashion. Binds GTP-bound translation factors.

Functionally, forms part of the ribosomal stalk which helps the ribosome interact with GTP-bound translation factors. Is thus essential for accurate translation. This is Large ribosomal subunit protein bL12 from Macrococcus caseolyticus (strain JCSC5402) (Macrococcoides caseolyticum).